A 944-amino-acid chain; its full sequence is MRDLDFTNILDVELLQKQCDAVAEANRNRPDVLRADLLAVLKKASTEGRQKAREALMADGGGLNCAYRISWLQDQITTVLYNFATAHIFPQQKDKFAVTAVGGYGRDTLAPGSDIDLLFLFLPRPAEETHKAVEFMLYVLWDMGFKVGHATRTVEECIALSKSDMTIRTAILEMRYICGLQRLETELETRFDKEIVTGTGPEFIAAKLAERDERHRKAGDTRYLVEPNVKEGKGGLRDLHTLFWISKYYYHVRDQAELVKLGVLSKHEYRLLEKADDFLWAVRCHMHFLTGKAEERLSFDIQREIAEAFGYHTRPGLSAVERFMKHYFLVAKDVGDLTRILCAALEDQQAKSIPGLTGVISRFTHRNRKIAGSVEFVEDRGRIALADPEVFKRDPVNIIRLFHVADINGLEFHPDALKRVTRSLALIDNALRENDEANRLFMSILTSKRDPALILRRMNEAGVLGRFIPEFGKIVAMMQFNMYHHYTVDEHLIRTVDILSEIDKGRAEDLHPLANKLMPGIEDREALYVAVLLHDIAKGRQEDHSIAGARVARKLCVRFGLSQKQTEIVVWLIEEHLTMSMVAQTRDLTDRKTITDFADRVQSLDRLKMLLILTICDIRAVGPGVWNGWKGQLLRTLYYETELLLAGGFSEVSRKERANAAAEALHSALADWSQKDRNTYTKLHYQPYLLSVPLEDQIRHAHFIRQADKAGQALATMVRTDSFHAITEITVLSPDHPRLLAVIAGACAAAGANIVDAQIFTTSDGRALDTIHVSREFTDDADELRRAATIGRMIEDVLSGRKRLPEVIATRARNRKKSKAFVIPPSVNITNSLSNKFTVIEVECLDRPGLLSEITAVLSDLSLDIQSARITTFGEKVIDTFYVTDLVGQKISGDSKRANITARMKAVMAEEEDELRERMPSGIIAPAATARTPPASEKKAGSPI.

The uridylyltransferase stretch occupies residues 1 to 371; it reads MRDLDFTNIL…RFTHRNRKIA (371 aa). The uridylyl-removing stretch occupies residues 372-727; sequence GSVEFVEDRG…VRTDSFHAIT (356 aa). Positions 488 to 604 constitute an HD domain; it reads VDEHLIRTVD…TDFADRVQSL (117 aa). 2 ACT domains span residues 728–809 and 839–918; these read EITV…EVIA and VIEV…LRER. The tract at residues 911–944 is disordered; it reads EEDELRERMPSGIIAPAATARTPPASEKKAGSPI. Over residues 925–935 the composition is skewed to low complexity; it reads APAATARTPPA.

It belongs to the GlnD family. Mg(2+) serves as cofactor.

The enzyme catalyses [protein-PII]-L-tyrosine + UTP = [protein-PII]-uridylyl-L-tyrosine + diphosphate. It carries out the reaction [protein-PII]-uridylyl-L-tyrosine + H2O = [protein-PII]-L-tyrosine + UMP + H(+). Its activity is regulated as follows. Uridylyltransferase (UTase) activity is inhibited by glutamine, while glutamine likely activates uridylyl-removing (UR) activity. In terms of biological role, modifies, by uridylylation and deuridylylation, the PII regulatory proteins GlnB and GlnK, in response to the nitrogen status of the cell that GlnD senses through the glutamine level. Under low glutamine levels, catalyzes the conversion of the PII proteins and UTP to PII-UMP and PPi, while under higher glutamine levels, GlnD likely hydrolyzes PII-UMP to PII and UMP (deuridylylation). Thus, controls uridylylation state and activity of the PII proteins, and plays an important role in the regulation of nitrogen metabolism. The sequence is that of Bifunctional uridylyltransferase/uridylyl-removing enzyme from Rhizobium leguminosarum bv. viciae.